The primary structure comprises 44 residues: Conotoxin Cl9a (44 aa).

3 positions are modified to 4-carboxyglutamate: glutamate 7, glutamate 8, and glutamate 24. Cystine bridges form between cysteine 9/cysteine 33, cysteine 15/cysteine 40, and cysteine 23/cysteine 42.

As to expression, expressed by the venom duct.

The protein resides in the secreted. This is Conotoxin Cl9a from Californiconus californicus (California cone).